Here is a 292-residue protein sequence, read N- to C-terminus: MPELPEVEVVRRGLQDHVVGKTMTAVRVHHPRAVRRHEAGPADLTARLLGARISGTDRRGKYLWLTLDAGAPTTGRDDPDAALVVHLGMSGQMLLGGVPRAEHVRISAVLDDGTVLSFADQRTFGGWQLADLVSVDGSVVPAPVAHLARDPLDPLFDVDSVIKVLRGKHSEVKRRLLDQQVVSGIGNIYADEALWRAKVHGARVAATLTRRQLGAVLDAAADVMREALAKGGTSFDSLYVNVNGQSGYFDRSLDAYGREGEHCRRCGAVMRREKFMNRSSFYCPRCQPRPRR.

Residue Pro-2 is the Schiff-base intermediate with DNA of the active site. Glu-3 serves as the catalytic Proton donor. Lys-61 functions as the Proton donor; for beta-elimination activity in the catalytic mechanism. DNA-binding residues include His-103, Arg-122, and Lys-168. Residues 254–288 (DAYGREGEHCRRCGAVMRREKFMNRSSFYCPRCQP) form an FPG-type zinc finger. Arg-278 acts as the Proton donor; for delta-elimination activity in catalysis.

The protein belongs to the FPG family. In terms of assembly, monomer. It depends on Zn(2+) as a cofactor.

It carries out the reaction Hydrolysis of DNA containing ring-opened 7-methylguanine residues, releasing 2,6-diamino-4-hydroxy-5-(N-methyl)formamidopyrimidine.. It catalyses the reaction 2'-deoxyribonucleotide-(2'-deoxyribose 5'-phosphate)-2'-deoxyribonucleotide-DNA = a 3'-end 2'-deoxyribonucleotide-(2,3-dehydro-2,3-deoxyribose 5'-phosphate)-DNA + a 5'-end 5'-phospho-2'-deoxyribonucleoside-DNA + H(+). Its function is as follows. Involved in base excision repair of DNA damaged by oxidation or by mutagenic agents. Acts as a DNA glycosylase that recognizes and removes damaged bases. Has a preference for oxidized purines, such as 7,8-dihydro-8-oxoguanine (8-oxoG). Has AP (apurinic/apyrimidinic) lyase activity and introduces nicks in the DNA strand. Cleaves the DNA backbone by beta-delta elimination to generate a single-strand break at the site of the removed base with both 3'- and 5'-phosphates. In Mycobacterium ulcerans (strain Agy99), this protein is Formamidopyrimidine-DNA glycosylase.